Reading from the N-terminus, the 350-residue chain is MKLKTMTMEWTGDSLILIDQRRLPFEEVYVTCADYRAVALSIKEMVVRGAPAIGATAAFGYVLGAKEILKKSHNYEQVVMQMKNVKETLAKTRPTAVNLFWALERMEKRLIRHGKYEGLVKVLEDEALKIAKEDIEVNKAIGRNGAQLLQDGFTVLTHCNAGALATVDYGTALGVLRAAKEQGKKIKVYADETRPYLQGARLTAWELMKDGFDVTLISDNMAGWVMKQGKINAVIVGADRIAANGDVANKIGTYMVAVLANRHGIPFYVAAPLSTIDMSIKSGKEIPIEERSHEEVLTCGGKRVAPNNVNVYNPAFDVTDHELVTAIITEKGVVYPPYEENIKKLFEEGI.

Substrate is bound by residues Arg48–Ala50, Arg93, and Gln198. Catalysis depends on Asp239, which acts as the Proton donor. Asn249–Lys250 serves as a coordination point for substrate.

The protein belongs to the eIF-2B alpha/beta/delta subunits family. MtnA subfamily.

The catalysed reaction is 5-(methylsulfanyl)-alpha-D-ribose 1-phosphate = 5-(methylsulfanyl)-D-ribulose 1-phosphate. It participates in amino-acid biosynthesis; L-methionine biosynthesis via salvage pathway; L-methionine from S-methyl-5-thio-alpha-D-ribose 1-phosphate: step 1/6. Functionally, catalyzes the interconversion of methylthioribose-1-phosphate (MTR-1-P) into methylthioribulose-1-phosphate (MTRu-1-P). In Fervidobacterium nodosum (strain ATCC 35602 / DSM 5306 / Rt17-B1), this protein is Methylthioribose-1-phosphate isomerase.